The following is a 1305-amino-acid chain: Contactin-associated protein like 5-3 (1305 aa).

A signal peptide spans 1–24; sequence MDSVPRLNSVFTLVLSGLWHFGLT. The F5/8 type C domain maps to 25 to 174; it reads ATNYNCDDPL…IGMRVEVYGC (150 aa). Topologically, residues 25–1235 are extracellular; it reads ATNYNCDDPL…EPLTNAVPSD (1211 aa). Laminin G-like domains are found at residues 180–360 and 367–544; these read VADF…TFSC and PITF…IDLC. N-linked (GlcNAc...) asparagine glycosylation is present at Asn-282. Cys-329 and Cys-360 form a disulfide bridge. Asn-496 carries an N-linked (GlcNAc...) asparagine glycan. Disulfide bonds link Cys-512-Cys-544, Cys-550-Cys-561, and Cys-555-Cys-570. Positions 546–583 constitute an EGF-like 1 domain; sequence IKDRCLPNYCEHGGQCAQTWTNFYCNCSDTGYTGATCH. N-linked (GlcNAc...) asparagine glycosylation is present at Asn-571. A disulfide bridge links Cys-572 with Cys-582. One can recognise a Fibrinogen C-terminal domain in the interval 584–790; that stretch reads DSIYEQSCEV…LRCYGDRHFW (207 aa). The Laminin G-like 3 domain maps to 791 to 956; it reads NAVSFSTEAS…KVTSGVRPGC (166 aa). 4 cysteine pairs are disulfide-bonded: Cys-929–Cys-956, Cys-960–Cys-973, Cys-967–Cys-982, and Cys-984–Cys-994. Positions 957–995 constitute an EGF-like 2 domain; it reads PGHCSSYGRNCQNGGKCVEKHIGYSCDCTNSPYEGPFCQ. The Laminin G-like 4 domain occupies 1013-1198; it reads QEPYSVTKNT…VQRTLTESSC (186 aa). N-linked (GlcNAc...) asparagine glycans are attached at residues Asn-1023 and Asn-1057. Cys-1163 and Cys-1198 are oxidised to a cystine. A helical transmembrane segment spans residues 1236–1256; it reads LAVIGGIIAVVTFISFSVIGI. At 1257–1305 the chain is on the cytoplasmic side; it reads MTHFFYQHKRSHYASQMKEKEYPENVDSSSRNDIDLQNTTRECKQEDFI.

It belongs to the neurexin family. As to expression, expressed in brain.

It localises to the membrane. In terms of biological role, may play a role in the correct development and proper functioning of the peripheral and central nervous system and be involved in cell adhesion and intercellular communication. The protein is Contactin-associated protein like 5-3 (Cntnap5c) of Mus musculus (Mouse).